Reading from the N-terminus, the 482-residue chain is Cardiolipin synthase (482 aa).

Helical transmembrane passes span 4–24 and 34–54; these read LAYL…VTVF and WAWL…YLIF. PLD phosphodiesterase domains are found at residues 217–244 and 395–422; these read LNYR…GDEY and DNGF…DFRS. Active-site residues include His222, Lys224, Asp229, His400, Lys402, and Asp407.

The protein belongs to the phospholipase D family. Cardiolipin synthase subfamily.

Its subcellular location is the cell membrane. It catalyses the reaction 2 a 1,2-diacyl-sn-glycero-3-phospho-(1'-sn-glycerol) = a cardiolipin + glycerol. Its function is as follows. Catalyzes the reversible phosphatidyl group transfer from one phosphatidylglycerol molecule to another to form cardiolipin (CL) (diphosphatidylglycerol) and glycerol. This chain is Cardiolipin synthase (cls), found in Listeria innocua serovar 6a (strain ATCC BAA-680 / CLIP 11262).